Consider the following 675-residue polypeptide: DNA ligase (675 aa).

NAD(+) contacts are provided by residues 35-39 (DSEYD), 84-85 (SL), and Glu115. Residue Lys117 is the N6-AMP-lysine intermediate of the active site. Residues Arg138, Glu175, Lys292, and Lys316 each contribute to the NAD(+) site. 4 residues coordinate Zn(2+): Cys410, Cys413, Cys428, and Cys434. The 83-residue stretch at 593-675 (QIVQPLLGRT…RNFLDDTSFP (83 aa)) folds into the BRCT domain.

It belongs to the NAD-dependent DNA ligase family. LigA subfamily. The cofactor is Mg(2+). Mn(2+) is required as a cofactor.

The catalysed reaction is NAD(+) + (deoxyribonucleotide)n-3'-hydroxyl + 5'-phospho-(deoxyribonucleotide)m = (deoxyribonucleotide)n+m + AMP + beta-nicotinamide D-nucleotide.. DNA ligase that catalyzes the formation of phosphodiester linkages between 5'-phosphoryl and 3'-hydroxyl groups in double-stranded DNA using NAD as a coenzyme and as the energy source for the reaction. It is essential for DNA replication and repair of damaged DNA. The sequence is that of DNA ligase from Nitrosococcus oceani (strain ATCC 19707 / BCRC 17464 / JCM 30415 / NCIMB 11848 / C-107).